Reading from the N-terminus, the 131-residue chain is Small ribosomal subunit protein uS8 (131 aa).

This sequence belongs to the universal ribosomal protein uS8 family. In terms of assembly, part of the 30S ribosomal subunit. Contacts proteins S5 and S12.

In terms of biological role, one of the primary rRNA binding proteins, it binds directly to 16S rRNA central domain where it helps coordinate assembly of the platform of the 30S subunit. This is Small ribosomal subunit protein uS8 from Nitrosospira multiformis (strain ATCC 25196 / NCIMB 11849 / C 71).